The sequence spans 520 residues: GMP synthase [glutamine-hydrolyzing] (520 aa).

A Glutamine amidotransferase type-1 domain is found at 12–205 (KIIVLDYGSQ…AISICGARGD (194 aa)). The active-site Nucleophile is the Cys-89. Residues His-179 and Glu-181 contribute to the active site. The region spanning 206–395 (WSMDNFIDME…LGMPDEVVWR (190 aa)) is the GMPS ATP-PPase domain. 233 to 239 (SGGVDSS) is a binding site for ATP.

As to quaternary structure, homodimer.

The enzyme catalyses XMP + L-glutamine + ATP + H2O = GMP + L-glutamate + AMP + diphosphate + 2 H(+). Its pathway is purine metabolism; GMP biosynthesis; GMP from XMP (L-Gln route): step 1/1. Its function is as follows. Catalyzes the synthesis of GMP from XMP. This is GMP synthase [glutamine-hydrolyzing] from Streptococcus equi subsp. zooepidemicus (strain H70).